We begin with the raw amino-acid sequence, 212 residues long: Acyl-homoserine-lactone synthase (212 aa).

Belongs to the autoinducer synthase family.

It catalyses the reaction a fatty acyl-[ACP] + S-adenosyl-L-methionine = an N-acyl-L-homoserine lactone + S-methyl-5'-thioadenosine + holo-[ACP] + H(+). In terms of biological role, required for the synthesis of OHHL (N-(3-oxohexanoyl)-L-homoserine lactone), an autoinducer molecule which binds to the EchR transcriptional regulator. The sequence is that of Acyl-homoserine-lactone synthase (echI) from Dickeya chrysanthemi (Pectobacterium chrysanthemi).